Here is a 324-residue protein sequence, read N- to C-terminus: Beta-ketoacyl-[acyl-carrier-protein] synthase III (324 aa).

Catalysis depends on residues Cys-114 and His-246. An ACP-binding region spans residues 247–251 (QANLR). Asn-276 is a catalytic residue.

The protein belongs to the thiolase-like superfamily. FabH family. Homodimer.

It is found in the cytoplasm. The enzyme catalyses malonyl-[ACP] + acetyl-CoA + H(+) = 3-oxobutanoyl-[ACP] + CO2 + CoA. It functions in the pathway lipid metabolism; fatty acid biosynthesis. Its function is as follows. Catalyzes the condensation reaction of fatty acid synthesis by the addition to an acyl acceptor of two carbons from malonyl-ACP. Catalyzes the first condensation reaction which initiates fatty acid synthesis and may therefore play a role in governing the total rate of fatty acid production. Possesses both acetoacetyl-ACP synthase and acetyl transacylase activities. Its substrate specificity determines the biosynthesis of branched-chain and/or straight-chain of fatty acids. In Campylobacter jejuni subsp. jejuni serotype O:6 (strain 81116 / NCTC 11828), this protein is Beta-ketoacyl-[acyl-carrier-protein] synthase III.